We begin with the raw amino-acid sequence, 536 residues long: uncharacterized protein (536 aa).

Residues 1–8 (MVSIKRYE) lie on the Cytoplasmic side of the membrane. Residues 9 to 29 (IISFVIAAFFFLSGLSMWIAF) form a helical membrane-spanning segment. Residues 30 to 502 (WPIFNSELRS…VWLGVIIVPR (473 aa)) lie on the Extracellular side of the membrane. N-linked (GlcNAc...) asparagine glycans are attached at residues N73, N236, N363, and N376. The helical transmembrane segment at 503–523 (IIEYLKFVLIFISICILTTLL) threads the bilayer. Over 524 to 536 (VIRVRVKGTVSVV) the chain is Cytoplasmic.

It belongs to the CD36 family.

It is found in the membrane. This is an uncharacterized protein from Caenorhabditis elegans.